We begin with the raw amino-acid sequence, 278 residues long: Large ribosomal subunit protein uL2 (278 aa).

Disordered regions lie at residues 1–58 (MAIR…GGGH) and 225–278 (VMNP…KNKR). Positions 37 to 58 (LHGRGGRNAHGRITTRHKGGGH) are enriched in basic residues. The span at 253 to 267 (PEGRTRKNKASDKMI) shows a compositional bias: basic and acidic residues. A compositionally biased stretch (basic residues) spans 268–278 (VRRRRTGKNKR).

This sequence belongs to the universal ribosomal protein uL2 family. In terms of assembly, part of the 50S ribosomal subunit. Forms a bridge to the 30S subunit in the 70S ribosome.

Its function is as follows. One of the primary rRNA binding proteins. Required for association of the 30S and 50S subunits to form the 70S ribosome, for tRNA binding and peptide bond formation. It has been suggested to have peptidyltransferase activity; this is somewhat controversial. Makes several contacts with the 16S rRNA in the 70S ribosome. The sequence is that of Large ribosomal subunit protein uL2 from Rhodococcus erythropolis (strain PR4 / NBRC 100887).